A 57-amino-acid polypeptide reads, in one-letter code: uncharacterized protein (57 aa).

The N-terminal stretch at 1 to 22 (MNEIIITIIVLILLLFITLSRN) is a signal peptide. The stretch at 26-57 (NNQSNNGKKEKLIKCKKEVQQLRQKLDQLTFQ) forms a coiled coil.

This is an uncharacterized protein from Acheta domesticus (House cricket).